The primary structure comprises 276 residues: MQHPAEHSPLGKSSQYIAEYSPELLFPISRTSKWAELGLDGANLPYQGVDYWNCYELSWLLPSGKPVVAIGEFAIPADSPNIIESKSFKLYLNSLNQTVFASWGELQATLARDLSAVAGKPVAVRLRSLTEVAGEGVATLPGQCIDELEISVTQYAHPQPELLRCDASRVVEESLHSHLLKSNCPVTGQPDWGSLVVQYRGAALDHASLLAYLVSFRQHADFHEQCVERIFLDLQRLLQPQSLTVYARYVRRGGLDINPYRSTEALRVDNARLVRQ.

Substrate is bound at residue 83–85 (IES). 85-86 (SK) is a binding site for NADPH. C184 acts as the Thioimide intermediate in catalysis. D191 (proton donor) is an active-site residue. 223–224 (HE) contacts substrate. 252-253 (RG) serves as a coordination point for NADPH.

The protein belongs to the GTP cyclohydrolase I family. QueF type 2 subfamily. In terms of assembly, homodimer.

The protein localises to the cytoplasm. The catalysed reaction is 7-aminomethyl-7-carbaguanine + 2 NADP(+) = 7-cyano-7-deazaguanine + 2 NADPH + 3 H(+). It participates in tRNA modification; tRNA-queuosine biosynthesis. In terms of biological role, catalyzes the NADPH-dependent reduction of 7-cyano-7-deazaguanine (preQ0) to 7-aminomethyl-7-deazaguanine (preQ1). This chain is NADPH-dependent 7-cyano-7-deazaguanine reductase, found in Ectopseudomonas mendocina (strain ymp) (Pseudomonas mendocina).